We begin with the raw amino-acid sequence, 179 residues long: Large ribosomal subunit protein uL5 (179 aa).

Belongs to the universal ribosomal protein uL5 family. As to quaternary structure, part of the 50S ribosomal subunit; part of the 5S rRNA/L5/L18/L25 subcomplex. Contacts the 5S rRNA and the P site tRNA. Forms a bridge to the 30S subunit in the 70S ribosome.

In terms of biological role, this is one of the proteins that bind and probably mediate the attachment of the 5S RNA into the large ribosomal subunit, where it forms part of the central protuberance. In the 70S ribosome it contacts protein S13 of the 30S subunit (bridge B1b), connecting the 2 subunits; this bridge is implicated in subunit movement. Contacts the P site tRNA; the 5S rRNA and some of its associated proteins might help stabilize positioning of ribosome-bound tRNAs. The chain is Large ribosomal subunit protein uL5 from Desulfotalea psychrophila (strain LSv54 / DSM 12343).